The primary structure comprises 170 residues: Peptide methionine sulfoxide reductase MsrA (170 aa).

The active site involves Cys-14.

This sequence belongs to the MsrA Met sulfoxide reductase family.

It carries out the reaction L-methionyl-[protein] + [thioredoxin]-disulfide + H2O = L-methionyl-(S)-S-oxide-[protein] + [thioredoxin]-dithiol. The catalysed reaction is [thioredoxin]-disulfide + L-methionine + H2O = L-methionine (S)-S-oxide + [thioredoxin]-dithiol. Its function is as follows. Has an important function as a repair enzyme for proteins that have been inactivated by oxidation. Catalyzes the reversible oxidation-reduction of methionine sulfoxide in proteins to methionine. This chain is Peptide methionine sulfoxide reductase MsrA, found in Streptomyces avermitilis (strain ATCC 31267 / DSM 46492 / JCM 5070 / NBRC 14893 / NCIMB 12804 / NRRL 8165 / MA-4680).